The sequence spans 159 residues: Na(+)/H(+) antiporter subunit E1 (159 aa).

4 helical membrane-spanning segments follow: residues 1-21 (MAIQ…VTNS), 27-47 (FVLG…VLPG), 60-80 (LIIT…KIIL), and 101-121 (WQLV…VLGI).

It belongs to the CPA3 antiporters (TC 2.A.63) subunit E family. As to quaternary structure, may form a heterooligomeric complex that consists of seven subunits: mnhA1, mnhB1, mnhC1, mnhD1, mnhE1, mnhF1 and mnhG1.

The protein localises to the cell membrane. Its function is as follows. Mnh complex is a Na(+)/H(+) antiporter involved in Na(+) excretion. The polypeptide is Na(+)/H(+) antiporter subunit E1 (mnhE1) (Staphylococcus epidermidis (strain ATCC 35984 / DSM 28319 / BCRC 17069 / CCUG 31568 / BM 3577 / RP62A)).